A 244-amino-acid chain; its full sequence is Claudin-12 (244 aa).

At 1–10 the chain is on the cytoplasmic side; the sequence is MGCRDVHAAT. The chain crosses the membrane as a helical span at residues 11 to 31; the sequence is VLSFLCGIASVAGLFAGTLLP. At 32–87 the chain is on the extracellular side; that stretch reads NWRKLRLITFNRNEKNLTIYTGLWVKCARYDGSSDCLMYDRTWYLSVDQLDLRVLQ. Residues 88–108 traverse the membrane as a helical segment; the sequence is FALPLSIVIAMGALLLCLIGM. Residues 109–135 lie on the Cytoplasmic side of the membrane; it reads CNTAFNSSVPNIKLAKCLVNSAGCHLV. A helical transmembrane segment spans residues 136–156; it reads AGLLFFLAGTVSLSPSIWAIF. The Extracellular segment spans residues 157-174; sequence YNSHLNRKFEPVFTFDYA. Residues 175–195 form a helical membrane-spanning segment; that stretch reads VFVTIASSGGLFMTALLLFVW. At 196–244 the chain is on the cytoplasmic side; sequence YCACKSLSSPFWQPLYSHAPGMHTYSQPYSSRSRLSAIEIDIPVVSHST. Residues Ser-228 and Ser-231 each carry the phosphoserine modification.

The protein belongs to the claudin family. In terms of assembly, interacts with OCLN.

It is found in the cell junction. It localises to the tight junction. Its subcellular location is the cell membrane. Plays a major role in tight junction-specific obliteration of the intercellular space, through calcium-independent cell-adhesion activity. The chain is Claudin-12 (Cldn12) from Mus musculus (Mouse).